The following is a 476-amino-acid chain: MKITLPEYDKAQVLVVGDVMLDRYWHGPTARISPEAPVPVVKVEQIEERPGGAANVALNVAALGGKVNLIGLVGDDEAANVLVKNLKSVHVNTDFVSVPNFPTITKLRVLSRHQQLLRLDFEEGFEGIDSTDILEKMHASLTRQPSVVILSDYNKGSLADVQKMIQLAKKFNSVVLVDPKGSEFEKYRGATLLTPNLAEFEAVVGKCHSEKELVERGLALIKELDLDALLVTRSEHGMTLLREGQEPLHLPTQAQEVYDVTGAGDTVISVLASSLAAGSSFEQACTLANAAAGVVVGKIGTSTVNTIELANAVYSQQEIGFGVLSEEQLKLAVKLAQHRGEKVVMTNGCFDILHAGHVSYLNTAREQGNRLIVAVNSDQSVRNLKGQGRPVNPVDRRMAVLAGLGAVDWVIEFTEETPQRLIAEILPDLLVKGGDYLPEDIAGGKEVIANGGEVRVLQFEEGCSTSEIIKTIRNNS.

The tract at residues 1–319 (MKITLPEYDK…ANAVYSQQEI (319 aa)) is ribokinase. ATP is bound at residue 196–199 (NLAE). The active site involves D265. Residues 345–476 (MTNGCFDILH…EIIKTIRNNS (132 aa)) form a cytidylyltransferase region.

It in the N-terminal section; belongs to the carbohydrate kinase PfkB family. The protein in the C-terminal section; belongs to the cytidylyltransferase family. As to quaternary structure, homodimer.

The catalysed reaction is D-glycero-beta-D-manno-heptose 7-phosphate + ATP = D-glycero-beta-D-manno-heptose 1,7-bisphosphate + ADP + H(+). It carries out the reaction D-glycero-beta-D-manno-heptose 1-phosphate + ATP + H(+) = ADP-D-glycero-beta-D-manno-heptose + diphosphate. It functions in the pathway nucleotide-sugar biosynthesis; ADP-L-glycero-beta-D-manno-heptose biosynthesis; ADP-L-glycero-beta-D-manno-heptose from D-glycero-beta-D-manno-heptose 7-phosphate: step 1/4. It participates in nucleotide-sugar biosynthesis; ADP-L-glycero-beta-D-manno-heptose biosynthesis; ADP-L-glycero-beta-D-manno-heptose from D-glycero-beta-D-manno-heptose 7-phosphate: step 3/4. Its function is as follows. Catalyzes the phosphorylation of D-glycero-D-manno-heptose 7-phosphate at the C-1 position to selectively form D-glycero-beta-D-manno-heptose-1,7-bisphosphate. Functionally, catalyzes the ADP transfer from ATP to D-glycero-beta-D-manno-heptose 1-phosphate, yielding ADP-D-glycero-beta-D-manno-heptose. The chain is Bifunctional protein HldE from Psychromonas ingrahamii (strain DSM 17664 / CCUG 51855 / 37).